The following is a 471-amino-acid chain: GDP-mannose transporter (471 aa).

The span at 1 to 13 shows a compositional bias: polar residues; the sequence is MSSGSRSFFTPQE. The segment at 1–52 is disordered; that stretch reads MSSGSRSFFTPQETRLELPQGAAHQTPDITRPASPSENDRAPFLNGGPSDAR. Residues 1-70 lie on the Cytoplasmic side of the membrane; it reads MSSGSRSFFT…ALRNDSEKPA (70 aa). The chain crosses the membrane as a helical span at residues 71 to 91; sequence VGIMALAPILCYCAASITMTV. At 92–101 the chain is on the lumenal side; sequence VNKFTVSGRG. A helical transmembrane segment spans residues 102-122; sequence FNMNLLVLLIQSTVGVTCVWI. The Cytoplasmic portion of the chain corresponds to 123-139; the sequence is AERAGLIQLRGLNAKDA. A helical membrane pass occupies residues 140–160; sequence WNWMPLSIMLVFVIWTGSKAL. Residues 161-166 are Lumenal-facing; it reads QYLNIS. Asn164 carries N-linked (GlcNAc...) asparagine glycosylation. Residues 167–187 form a helical membrane-spanning segment; sequence VYTIFKNLTIILIAYGEVMWF. Over 188–193 the chain is Cytoplasmic; sequence GGRVTR. Residues 194–214 form a helical membrane-spanning segment; it reads IVLCSFLFMVLSSVIAAWSDI. The Lumenal segment spans residues 215 to 279; it reads SNVFAIGNLS…DVIEGFQGYG (65 aa). A glycan (N-linked (GlcNAc...) asparagine) is linked at Asn222. The chain crosses the membrane as a helical span at residues 280–300; the sequence is LLSSGYVWMALNCICSATYVL. Residues 301-315 lie on the Cytoplasmic side of the membrane; sequence LMRKRIKVTGFKDWD. A helical transmembrane segment spans residues 316 to 336; sequence TMFYNNFLSIPVLLLMSFLVE. Topologically, residues 337 to 354 are lumenal; sequence DWSYANLHKNFPDDKQTK. The chain crosses the membrane as a helical span at residues 355-375; that stretch reads LISAIVFSGACAILISYTTAW. Residues 376–383 lie on the Cytoplasmic side of the membrane; sequence CIRATSST. A helical membrane pass occupies residues 384–404; sequence TYSMVGALNKLPVALSGMVFF. Over 405-408 the chain is Lumenal; it reads HDPP. Residues 409–429 traverse the membrane as a helical segment; the sequence is VTFSSVSAIAVGFFAGLVYAF. The Cytoplasmic portion of the chain corresponds to 430-471; that stretch reads GKNKQAEAAKLGGHASANGSSSMSGSKDGSSLPMHTFNDRKD. A compositionally biased stretch (low complexity) spans 442–460; that stretch reads GHASANGSSSMSGSKDGSS. The disordered stretch occupies residues 442 to 471; the sequence is GHASANGSSSMSGSKDGSSLPMHTFNDRKD.

It belongs to the TPT transporter family. SLC35D subfamily. Homooligomer.

It is found in the golgi apparatus membrane. The protein localises to the cytoplasmic vesicle membrane. Its subcellular location is the endoplasmic reticulum membrane. Its function is as follows. Involved in the import of GDP-mannose from the cytoplasm into the Golgi lumen. The sequence is that of GDP-mannose transporter (VRG4) from Mycosarcoma maydis (Corn smut fungus).